The following is a 511-amino-acid chain: Putative thymidine phosphorylase (511 aa).

This sequence belongs to the thymidine/pyrimidine-nucleoside phosphorylase family. Type 2 subfamily.

The catalysed reaction is thymidine + phosphate = 2-deoxy-alpha-D-ribose 1-phosphate + thymine. The sequence is that of Putative thymidine phosphorylase from Bradyrhizobium sp. (strain BTAi1 / ATCC BAA-1182).